Consider the following 438-residue polypeptide: Aflatoxin cluster transcriptional coactivator aflS (438 aa).

The 70-residue stretch at 65–134 (LALYNQLLAC…PSPGHVAHSV (70 aa)) folds into the HTH iclR-type domain. Positions 95 to 114 (FEDVADIAGVPECRLRRLVR) form a DNA-binding region, H-T-H motif.

In terms of assembly, interacts with aflR.

It localises to the nucleus. In terms of biological role, transcription factor; part of the gene cluster that mediates the biosynthesis of aflatoxin, a polyketide-derived furanocoumarin which is part of the most toxic and carcinogenic compounds among the known mycotoxins. AflS exhibits no DNA-binding capability on its own, but forms a complex with the other aflatoxin cluster transcription factor aflR and acts as a modulator of aflR's DNA-binding by decreasing its DNA-binding affinity. This is Aflatoxin cluster transcriptional coactivator aflS from Aspergillus flavus (strain ATCC 200026 / FGSC A1120 / IAM 13836 / NRRL 3357 / JCM 12722 / SRRC 167).